Here is a 73-residue protein sequence, read N- to C-terminus: Large ribosomal subunit protein bL31 (73 aa).

The protein belongs to the bacterial ribosomal protein bL31 family. Type A subfamily. In terms of assembly, part of the 50S ribosomal subunit.

Binds the 23S rRNA. The chain is Large ribosomal subunit protein bL31 from Rhizobium etli (strain CIAT 652).